The sequence spans 163 residues: Glyoxalase domain-containing protein 5 (163 aa).

Residues 41 to 161 (HLDHLVLTVR…DDNLIEVSNY (121 aa)) form the VOC domain.

Belongs to the glyoxalase I family.

The protein is Glyoxalase domain-containing protein 5 (glod5) of Danio rerio (Zebrafish).